Consider the following 319-residue polypeptide: MTATQKHNLFTPEPHYIPGYAGFYPQLRYQVGNTYGRTTAQLLTDPSVQKSPCSVLSPMTKPKFIEDFSKSKPPWIPCRDLREPYIPHYTSLKPYKNFEILGQLPRQDVDTQGPPQVENRQGPLTAGFMPYPPYPACPPGRKGEARDLGHPGLLLAYGEEAWKDAAPLQDTPGKNNQLYHCRRDEYLPPHPPQETLDVGRFQRLPQLDHPNLIQRKAISGYAGFVPRFAWVMGMNYRDGVTQAMDDFDKNQFVFRHPVCALGERLPRTHWPNTTIYRSQGLIPFYMGFIPSMQDNYALTFGNSTRRAYQKELDRRSHTL.

It belongs to the CIMIP2 family. Microtubule inner protein component of sperm flagellar doublet microtubules.

The protein localises to the cytoplasm. It localises to the cytoskeleton. The protein resides in the flagellum axoneme. In terms of biological role, microtubule inner protein (MIP) part of the dynein-decorated doublet microtubules (DMTs) in flagellum axoneme. Binds to the intra-tubulin interfaces. This chain is Ciliary microtubule inner protein 2A (Cimip2a), found in Mus musculus (Mouse).